A 482-amino-acid chain; its full sequence is MADVRNPTKNHHGHHHLHALLIPYPFQGHVNPFVHLAIKLASQGITVTFVNTHYIHHQITNGSDGDIFAGVRSESGLDIRYATVSDGLPVGFDRSLNHDTYQSSLLHVFYAHVEELVASLVGGDGGVNVMIADTFFVWPSVVARKFGLVCVSFWTEAALVFSLYYHMDLLRIHGHFGAQETRSDLIDYIPGVAAINPKDTASYLQETDTSSVVHQIIFKAFEDVKKVDFVLCNTIQQFEDKTIKALNTKIPFYAIGPIIPFNNQTGSVTTSLWSESDCTQWLNTKPKSSVLYISFGSYAHVTKKDLVEIAHGILLSKVNFVWVVRPDIVSSDETNPLPEGFETEAGDRGIVIPWCCQMTVLSHESVGGFLTHCGWNSILETIWCEVPVLCFPLLTDQVTNRKLVVDDWEIGINLCEDKSDFGRDEVGRNINRLMCGVSKEKIGRVKMSLEGAVRNSGSSSEMNLGLFIDGLLSKVGLSNGKA.

UDP-alpha-D-glucose contacts are provided by residues Ser297, 355 to 357 (CCQ), 372 to 380 (HCGWNSILE), and 394 to 397 (LTDQ).

This sequence belongs to the UDP-glycosyltransferase family.

The chain is UDP-glycosyltransferase 86A2 (UGT86A2) from Arabidopsis thaliana (Mouse-ear cress).